The primary structure comprises 116 residues: Beta-2-microglobulin (116 aa).

The first 19 residues, Met-1–Gly-19, serve as a signal peptide directing secretion. The region spanning Pro-24 to Tyr-110 is the Ig-like C1-type domain. A disulfide bridge links Cys-44 with Cys-99.

This sequence belongs to the beta-2-microglobulin family. As to quaternary structure, heterodimer of an alpha chain and a beta chain. Beta-2-microglobulin is the beta-chain of major histocompatibility complex class I molecules.

The protein resides in the secreted. Functionally, component of the class I major histocompatibility complex (MHC). Involved in the presentation of peptide antigens to the immune system. The sequence is that of Beta-2-microglobulin (b2m) from Cyprinus carpio (Common carp).